The sequence spans 295 residues: Protoheme IX farnesyltransferase (295 aa).

9 consecutive transmembrane segments (helical) span residues 8–28 (VTKP…FLLA), 35–55 (YPLF…GCVF), 84–104 (ASLV…WFGA), 107–127 (LACW…SLYM), 132–152 (VYGT…GYCA), 162–182 (AILL…IAIF), 208–228 (ITLY…GGYA), 233–253 (LVVA…GYKV), and 264–284 (FVFS…DFMV).

This sequence belongs to the UbiA prenyltransferase family. Protoheme IX farnesyltransferase subfamily.

The protein localises to the cell inner membrane. The catalysed reaction is heme b + (2E,6E)-farnesyl diphosphate + H2O = Fe(II)-heme o + diphosphate. The protein operates within porphyrin-containing compound metabolism; heme O biosynthesis; heme O from protoheme: step 1/1. In terms of biological role, converts heme B (protoheme IX) to heme O by substitution of the vinyl group on carbon 2 of heme B porphyrin ring with a hydroxyethyl farnesyl side group. This chain is Protoheme IX farnesyltransferase, found in Klebsiella pneumoniae subsp. pneumoniae (strain ATCC 700721 / MGH 78578).